The primary structure comprises 275 residues: MEKEKRLTKKEIFSMFIRSNFLLGSFNFERVQAMGYCYVMIPAIKKLYGPGAKRNEALQRHLEWFNTHPWLTAPIFGVTAAMEEEMANNKGIDGKAISGMKIGLMGPIAGVGDPIFWGTIRPVLAALGASLALGGNIAGPLLFFFLLNAIRLSTKYYGLKYGYVKGMEILQDLAGNRIQKLTEGASILGLFVMGALVSKWTTINIPIVVSRIKDESGKVDVQTVQNVLDSIMPGALPLGLTLLVAWMLRKGVNPLLIICGIFVIGILGYWAGFLA.

The 270-residue stretch at 5-274 folds into the PTS EIID domain; sequence KRLTKKEIFS…GILGYWAGFL (270 aa). 5 helical membrane-spanning segments follow: residues 100–120, 127–147, 187–207, 227–247, and 255–275; these read MKIGLMGPIAGVGDPIFWGTI, LGASLALGGNIAGPLLFFFLL, ILGLFVMGALVSKWTTINIPI, VLDSIMPGALPLGLTLLVAWM, and LLIICGIFVIGILGYWAGFLA.

Its subcellular location is the cell membrane. In terms of biological role, the phosphoenolpyruvate-dependent sugar phosphotransferase system (PTS), a major carbohydrate active -transport system, catalyzes the phosphorylation of incoming sugar substrates concomitant with their translocation across the cell membrane. This system is involved in fructose transport. The sequence is that of Fructose permease IID component (levG) from Bacillus subtilis (strain 168).